Here is a 367-residue protein sequence, read N- to C-terminus: Phospho-N-acetylmuramoyl-pentapeptide-transferase (367 aa).

10 helical membrane passes run 27–47, 73–93, 97–117, 132–152, 167–187, 200–220, 237–257, 264–284, 289–309, and 344–364; these read VLAA…VIRW, TMGG…WGDL, YVWT…YDDW, WKFF…AFSA, TMAY…VIVG, GLAI…AYVT, AGEL…FLWF, VFMG…VAVI, IVLL…MLQV, and QVVV…LSTL.

Belongs to the glycosyltransferase 4 family. MraY subfamily. Requires Mg(2+) as cofactor.

The protein localises to the cell inner membrane. The catalysed reaction is UDP-N-acetyl-alpha-D-muramoyl-L-alanyl-gamma-D-glutamyl-meso-2,6-diaminopimeloyl-D-alanyl-D-alanine + di-trans,octa-cis-undecaprenyl phosphate = di-trans,octa-cis-undecaprenyl diphospho-N-acetyl-alpha-D-muramoyl-L-alanyl-D-glutamyl-meso-2,6-diaminopimeloyl-D-alanyl-D-alanine + UMP. Its pathway is cell wall biogenesis; peptidoglycan biosynthesis. In terms of biological role, catalyzes the initial step of the lipid cycle reactions in the biosynthesis of the cell wall peptidoglycan: transfers peptidoglycan precursor phospho-MurNAc-pentapeptide from UDP-MurNAc-pentapeptide onto the lipid carrier undecaprenyl phosphate, yielding undecaprenyl-pyrophosphoryl-MurNAc-pentapeptide, known as lipid I. The sequence is that of Phospho-N-acetylmuramoyl-pentapeptide-transferase from Dechloromonas aromatica (strain RCB).